A 131-amino-acid polypeptide reads, in one-letter code: UPF0102 protein YraN (131 aa).

The segment covering 1–19 (MATVPTRSGSPRQLTTKQT) has biased composition (polar residues). The interval 1–20 (MATVPTRSGSPRQLTTKQTG) is disordered.

This sequence belongs to the UPF0102 family.

The chain is UPF0102 protein YraN from Escherichia coli (strain 55989 / EAEC).